The sequence spans 88 residues: Large ribosomal subunit protein eL34 (88 aa).

It belongs to the eukaryotic ribosomal protein eL34 family.

The polypeptide is Large ribosomal subunit protein eL34 (Saccharolobus solfataricus (strain ATCC 35092 / DSM 1617 / JCM 11322 / P2) (Sulfolobus solfataricus)).